Reading from the N-terminus, the 90-residue chain is Acylphosphatase (90 aa).

The Acylphosphatase-like domain maps to 5 to 90 (CERFIVKGHV…YKPFRGFKIL (86 aa)). Active-site residues include R20 and N38.

It belongs to the acylphosphatase family.

It carries out the reaction an acyl phosphate + H2O = a carboxylate + phosphate + H(+). This chain is Acylphosphatase (acyP), found in Vibrio parahaemolyticus serotype O3:K6 (strain RIMD 2210633).